The chain runs to 659 residues: Serine/threonine-protein kinase StkP (659 aa).

The Cytoplasmic segment spans residues 1 to 342; it reads MIQIGKIFAG…PQAPKKHRFK (342 aa). A Protein kinase domain is found at 12 to 273; it reads YRIVKQIGRG…EMYVDLSSSL (262 aa). ATP is bound by residues 18-26 and lysine 42; that span reads IGRGGMADV. Aspartate 136 serves as the catalytic Proton acceptor. Residues 343 to 363 traverse the membrane as a helical segment; sequence MRYLILLASLVLVAASLIWIL. At 364 to 659 the chain is on the extracellular side; the sequence is SRTPATIAIP…YKPKTTSATP (296 aa). 4 PASTA domains span residues 366–433, 434–505, 506–577, and 578–651; these read TPAT…VVSS, GKQS…TVAK, KATT…TVAK, and KVTS…SIYK. A disordered region spans residues 541–561; it reads EEESSESEPGTIMKQSPGAGT.

This sequence belongs to the protein kinase superfamily. Ser/Thr protein kinase family. Homodimer. StkP forms dimers through its transmembrane and extracellular domains. Dimer formation likely promotes autophosphorylation activity and might be necessary for targeting StkP substrate. In terms of processing, autophosphorylation occurs predominantly at the threonine residue and weakly at the serine residue. Dephosphorylated by PhpP.

Its subcellular location is the cell membrane. It carries out the reaction L-seryl-[protein] + ATP = O-phospho-L-seryl-[protein] + ADP + H(+). It catalyses the reaction L-threonyl-[protein] + ATP = O-phospho-L-threonyl-[protein] + ADP + H(+). Functionally, protein kinase involved in signal transduction pathways that regulate various cellular processes. Likely senses intracellular peptidoglycan subunits present in the cell division septa of actively growing cells; thus, intracellular unlinked peptidoglycan may serve as the signal molecules that trigger StkP phosphorylation activity on a set of substrates. Plays a crucial role in the regulation of cell shape and cell division of S.pneumoniae through control of at least DivIVA activity. Is involved in competence triggering, and is required for the expression of the central competence operon comCDE. StkP also plays an important role for bacterial survival in vivo. Identified target substrates that are specifically phosphorylated by StkP in vivo, mainly on threonine residues, are DivIVA, GlmM, PpaC, MapZ, KhpB (also called EloR/Jag, shown in strains R6 and Rx1) and StkP itself. Autophosphorylated StkP is a substrate for the cotranscribed protein phosphatase PhpP (shown in the avirulent strain Rx / Cp1015); PhpP and StkP appear to constitute a functional signaling couple in vivo. The sequence is that of Serine/threonine-protein kinase StkP (stkP) from Streptococcus pneumoniae serotype 2 (strain D39 / NCTC 7466).